We begin with the raw amino-acid sequence, 386 residues long: Glycerate dehydrogenase HPR, peroxisomal (386 aa).

NAD(+) contacts are provided by residues 175-176 (RI), 271-273 (CSR), and Asp297. The active site involves Arg273. Glu302 is a catalytic residue. Catalysis depends on His320, which acts as the Proton donor. 320-323 (HIAS) contributes to the NAD(+) binding site. The short motif at 384 to 386 (SKL) is the Microbody targeting signal element.

The protein belongs to the D-isomer specific 2-hydroxyacid dehydrogenase family. As to expression, present in leaves (at protein level). Mostly expressed in photosynthetic tissues such as leaves, stems, flowers, buds, and, to a lower extent, in siliques and roots.

Its subcellular location is the peroxisome. The catalysed reaction is (R)-glycerate + NAD(+) = 3-hydroxypyruvate + NADH + H(+). It functions in the pathway photosynthesis; photorespiration; 3-phospho-D-glycerate from glycine: step 3/4. Slightly inhibited by oxalate. In terms of biological role, catalyzes the NADH-dependent reduction of hydroxypyruvate into glycerate in the photorespiratory core cycle. Mediates fatty acid beta-oxidation in germinating seeds when malate dehydrogenase is absent. The polypeptide is Glycerate dehydrogenase HPR, peroxisomal (HPR) (Arabidopsis thaliana (Mouse-ear cress)).